The sequence spans 100 residues: Aspartyl/glutamyl-tRNA(Asn/Gln) amidotransferase subunit C (100 aa).

Belongs to the GatC family. In terms of assembly, heterotrimer of A, B and C subunits.

It catalyses the reaction L-glutamyl-tRNA(Gln) + L-glutamine + ATP + H2O = L-glutaminyl-tRNA(Gln) + L-glutamate + ADP + phosphate + H(+). The catalysed reaction is L-aspartyl-tRNA(Asn) + L-glutamine + ATP + H2O = L-asparaginyl-tRNA(Asn) + L-glutamate + ADP + phosphate + 2 H(+). Its function is as follows. Allows the formation of correctly charged Asn-tRNA(Asn) or Gln-tRNA(Gln) through the transamidation of misacylated Asp-tRNA(Asn) or Glu-tRNA(Gln) in organisms which lack either or both of asparaginyl-tRNA or glutaminyl-tRNA synthetases. The reaction takes place in the presence of glutamine and ATP through an activated phospho-Asp-tRNA(Asn) or phospho-Glu-tRNA(Gln). This Streptococcus pneumoniae (strain Hungary19A-6) protein is Aspartyl/glutamyl-tRNA(Asn/Gln) amidotransferase subunit C.